A 326-amino-acid chain; its full sequence is Isopenicillin N synthase (326 aa).

Isopenicillin N-binding residues include Arg-84, Tyr-88, and Tyr-186. N-[(5S)-5-amino-5-carboxypentanoyl]-L-cysteinyl-D-valine is bound by residues Arg-84, Tyr-88, Tyr-186, His-209, and Asp-211. Residues 183-283 form the Fe2OG dioxygenase domain; sequence LIRYPFLENY…RLSIPFFANL (101 aa). Fe(2+) is bound by residues His-209, Asp-211, and His-265. Residue Arg-274 participates in 2-oxoglutarate binding. Ser-276 contacts isopenicillin N. N-[(5S)-5-amino-5-carboxypentanoyl]-L-cysteinyl-D-valine is bound at residue Ser-276.

It belongs to the iron/ascorbate-dependent oxidoreductase family. Fe cation is required as a cofactor. L-ascorbate serves as cofactor.

The catalysed reaction is N-[(5S)-5-amino-5-carboxypentanoyl]-L-cysteinyl-D-valine + O2 = isopenicillin N + 2 H2O. It functions in the pathway antibiotic biosynthesis; penicillin G biosynthesis; penicillin G from L-alpha-aminoadipate and L-cysteine and L-valine: step 2/3. Functionally, removes, in the presence of oxygen, 4 hydrogen atoms from delta-L-(alpha-aminoadipyl)-L-cysteinyl-D-valine (ACV) to form the azetidinone and thiazolidine rings of isopenicillin. This Flavobacterium sp. (strain SC 12,154) protein is Isopenicillin N synthase (pcbC).